The following is a 364-amino-acid chain: Endoglucanase A (364 aa).

E169 serves as the catalytic Proton donor. The active-site Nucleophile is the E293.

It belongs to the glycosyl hydrolase 5 (cellulase A) family.

It localises to the cytoplasm. The enzyme catalyses Endohydrolysis of (1-&gt;4)-beta-D-glucosidic linkages in cellulose, lichenin and cereal beta-D-glucans.. The catalysed reaction is Endohydrolysis of (1-&gt;4)-beta-D-xylosidic linkages in xylans.. Its function is as follows. Hydrolyzes both carboxymethylcellulose and xylan. Probably has a role in hydrolyzing oligosaccharides derived from cellulose, which are transported across the cell wall. This Ruminococcus albus protein is Endoglucanase A (celA).